The following is a 179-amino-acid chain: Large ribosomal subunit protein uL5 (179 aa).

This sequence belongs to the universal ribosomal protein uL5 family. In terms of assembly, part of the 50S ribosomal subunit; part of the 5S rRNA/L5/L18/L25 subcomplex. Contacts the 5S rRNA and the P site tRNA. Forms a bridge to the 30S subunit in the 70S ribosome.

This is one of the proteins that bind and probably mediate the attachment of the 5S RNA into the large ribosomal subunit, where it forms part of the central protuberance. In the 70S ribosome it contacts protein S13 of the 30S subunit (bridge B1b), connecting the 2 subunits; this bridge is implicated in subunit movement. Contacts the P site tRNA; the 5S rRNA and some of its associated proteins might help stabilize positioning of ribosome-bound tRNAs. In Burkholderia vietnamiensis (strain G4 / LMG 22486) (Burkholderia cepacia (strain R1808)), this protein is Large ribosomal subunit protein uL5.